Reading from the N-terminus, the 553-residue chain is Keratin, type II cytoskeletal 6A (553 aa).

The span at Met1 to Ser20 shows a compositional bias: polar residues. The interval Met1–Ala21 is disordered. Positions Met1–Glu151 are head. The segment at Glu152 to Leu187 is coil 1A. An IF rod domain is found at Glu152–Leu465. The linker 1 stretch occupies residues Gln188–Tyr206. Residues Ile207–Met298 are coil 1B. Positions Gln299–Ile322 are linker 12. Residues Ile323–Glu461 are coil 2. The interval Glu462 to Gln553 is tail. Positions Leu528 to Gln553 are disordered. The span at Ser531 to Gln553 shows a compositional bias: low complexity.

This sequence belongs to the intermediate filament family. As to quaternary structure, heterodimer of a type I and a type II keratin. KRT6 isomers associate with KRT16 and/or KRT17. Interacts with TCHP. As to expression, predominates in the adult trunk skin, tongue, trachea/esophagus and eye. In adult skin, localization is restricted to hair follicles, where it is localized predominantly in the outer root sheath.

Functionally, epidermis-specific type I keratin involved in wound healing. Involved in the activation of follicular keratinocytes after wounding, while it does not play a major role in keratinocyte proliferation or migration. Participates in the regulation of epithelial migration by inhibiting the activity of SRC during wound repair. This is Keratin, type II cytoskeletal 6A (Krt6a) from Mus musculus (Mouse).